The chain runs to 295 residues: Tetrahydromethanopterin S-methyltransferase subunit E (295 aa).

7 consecutive transmembrane segments (helical) span residues 4–24 (MITGLGVVALMGAAATIAGAA), 60–80 (GEPVAYGTWCGIAGSVAFVLM), 87–107 (VIMAIAIGAVIAAMVHTTYAV), 140–160 (GFIVTFCTVGLSYLMTLPIPG), 161–181 (FAHPFPLPLLAVLWGITIGAI), 234–254 (YGGPLTGFAFGAIVFLSFWNT), and 255–275 (IVFGITGGIISGLIIVLLLII).

The protein belongs to the MtrE family. The complex is composed of 8 subunits; MtrA, MtrB, MtrC, MtrD, MtrE, MtrF, MtrG and MtrH.

The protein resides in the cell membrane. The enzyme catalyses 5-methyl-5,6,7,8-tetrahydromethanopterin + coenzyme M + 2 Na(+)(in) = 5,6,7,8-tetrahydromethanopterin + methyl-coenzyme M + 2 Na(+)(out). Its pathway is one-carbon metabolism; methanogenesis from CO(2); methyl-coenzyme M from 5,10-methylene-5,6,7,8-tetrahydromethanopterin: step 2/2. Functionally, part of a complex that catalyzes the formation of methyl-coenzyme M and tetrahydromethanopterin from coenzyme M and methyl-tetrahydromethanopterin. This is an energy-conserving, sodium-ion translocating step. The chain is Tetrahydromethanopterin S-methyltransferase subunit E from Methanothermobacter marburgensis (strain ATCC BAA-927 / DSM 2133 / JCM 14651 / NBRC 100331 / OCM 82 / Marburg) (Methanobacterium thermoautotrophicum).